We begin with the raw amino-acid sequence, 544 residues long: Membrane protein insertase YidC (544 aa).

Transmembrane regions (helical) follow at residues 13–33, 343–363, 409–429, 461–481, and 506–526; these read LSLF…SNIL, WGLS…PLTF, LGGC…YSLV, LYFV…FTQL, and MPIM…IYWI.

The protein belongs to the OXA1/ALB3/YidC family. Type 1 subfamily. As to quaternary structure, interacts with the Sec translocase complex via SecD. Specifically interacts with transmembrane segments of nascent integral membrane proteins during membrane integration.

It is found in the cell inner membrane. Required for the insertion and/or proper folding and/or complex formation of integral membrane proteins into the membrane. Involved in integration of membrane proteins that insert both dependently and independently of the Sec translocase complex, as well as at least some lipoproteins. Aids folding of multispanning membrane proteins. In Borreliella burgdorferi (strain ZS7) (Borrelia burgdorferi), this protein is Membrane protein insertase YidC.